Here is a 228-residue protein sequence, read N- to C-terminus: Probable C4-dicarboxylate response regulator DctR (228 aa).

The region spanning 7–123 (TVLLIEDDPM…RMKQALEQYR (117 aa)) is the Response regulatory domain. At Asp-58 the chain carries 4-aspartylphosphate. The segment at residues 180 to 199 (AEEVADGVGIARVTARRYLE) is a DNA-binding region (H-T-H motif).

Phosphorylated by DctS.

Its subcellular location is the cytoplasm. Member of the two-component regulatory system DctS/DctR. Essential for expression of DctP. In Priestia megaterium (Bacillus megaterium), this protein is Probable C4-dicarboxylate response regulator DctR (dctR).